We begin with the raw amino-acid sequence, 569 residues long: Methionine--tRNA ligase (569 aa).

The 'HIGH' region signature appears at 11 to 21 (PYINGIKHLGN). The Zn(2+) site is built by C143, C146, C156, and C159. Positions 342–346 (KFSTS) match the 'KMSKS' region motif. Residue T345 participates in ATP binding.

This sequence belongs to the class-I aminoacyl-tRNA synthetase family. MetG type 1 subfamily. As to quaternary structure, monomer. Zn(2+) is required as a cofactor.

The protein localises to the cytoplasm. The catalysed reaction is tRNA(Met) + L-methionine + ATP = L-methionyl-tRNA(Met) + AMP + diphosphate. In terms of biological role, is required not only for elongation of protein synthesis but also for the initiation of all mRNA translation through initiator tRNA(fMet) aminoacylation. The polypeptide is Methionine--tRNA ligase (Caulobacter vibrioides (strain ATCC 19089 / CIP 103742 / CB 15) (Caulobacter crescentus)).